A 495-amino-acid chain; its full sequence is Probable cytosol aminopeptidase (495 aa).

2 residues coordinate Mn(2+): Lys-258 and Asp-263. The active site involves Lys-270. Residues Asp-281, Asp-340, and Glu-342 each coordinate Mn(2+). The active site involves Arg-344.

The protein belongs to the peptidase M17 family. Mn(2+) is required as a cofactor.

It is found in the cytoplasm. The catalysed reaction is Release of an N-terminal amino acid, Xaa-|-Yaa-, in which Xaa is preferably Leu, but may be other amino acids including Pro although not Arg or Lys, and Yaa may be Pro. Amino acid amides and methyl esters are also readily hydrolyzed, but rates on arylamides are exceedingly low.. It catalyses the reaction Release of an N-terminal amino acid, preferentially leucine, but not glutamic or aspartic acids.. Presumably involved in the processing and regular turnover of intracellular proteins. Catalyzes the removal of unsubstituted N-terminal amino acids from various peptides. The chain is Probable cytosol aminopeptidase from Leptospira interrogans serogroup Icterohaemorrhagiae serovar Lai (strain 56601).